Consider the following 524-residue polypeptide: MNNQKTFKGLRLAALGLVAVAAFTAGCSDVSTELKTPVYKTKLTAEEIRNSAFKPEFPKQYASYERNDETTVMTEYKGSVPFNKNDNVNPLPEGYRHAQPYLKNLWLGYPFMYEYREARGHTYAIQDFLHIDRINRYAEKGGLPATCWNCKTPKMMEWVKESGDGFWAKDVNEFRDKIDMKDHTIGCATCHDPQTMELRITSVPLTDYLVSQGKDPKKLPRNEMRALVCGQCHVEYYFNGPTMGVNKKPVFPWAEGFDPADMYRYYDKHGDLQVKGFEGKFADWTHPASKTPMIKAQHPEYETWINGTHGAAGVTCADCHMSYTRSDDKKKISSHWWTSPMKDPEMRACRQCHSDKTPDYLKSRVLFTQKRTFDLLLAAQEVSVKAHEAVRLANEYQGAKAAGYDDLMIQAREMVRKGQFFWDYVSAENSVGFHNPAKALDTLAQSQQFSQKAIDLAMEATQYGIGKDLSGDIKTIVPPILKMNRKLQQDPEFMKTHKWFQYLPVLPKADQVWDGQKRLVSAKQ.

Positions 1-24 (MNNQKTFKGLRLAALGLVAVAAFT) are cleaved as a signal peptide. The interaction with NrfH stretch occupies residues 29–39 (DVSTELKTPVY). Ca(2+) is bound by residues G78, E117, and A118. Positions 121, 147, 150, 151, 187, 190, and 191 each coordinate heme. Positions 221 to 222 (RN) are interaction with NrfH. Heme contacts are provided by C229, C232, and H233. Positions 235, 236, 295, and 297 each coordinate Ca(2+). Heme-binding residues include H309, C316, C319, H320, H335, C349, C352, H353, and H434. The segment at 318 to 331 (DCHMSYTRSDDKKK) is interaction with NrfH. The segment at 351–355 (QCHSD) is interaction with NrfH.

The protein belongs to the cytochrome c-552 family. In terms of assembly, component of the NrfHA cytochrome c nitrite reductase complex composed of 4 NrfA catalytic subunits and 2 NrfH quinone-binding subunits. NrfA homodimer interacts with NrfH. The cofactor is Ca(2+). Requires heme as cofactor.

The protein resides in the cell inner membrane. It catalyses the reaction 6 Fe(III)-[cytochrome c] + NH4(+) + 2 H2O = 6 Fe(II)-[cytochrome c] + nitrite + 8 H(+). In terms of biological role, catalytic subunit of the cytochrome c nitrite reductase holocomplex NrfHA. Has both nitrite and sulfite reductase activities. Catalyzes the reduction of nitrite to ammonia, consuming six electrons acquired by the electron donor subunit NrfH from the menaquinone pool, in an anaerobic respiratory process of nitrite. The other biological function of the NrfHA holocomplex is to detoxify nitrite. This function is essential for the survival of this organism as it enables it to overcome inhibition by nitrite, which is produced by other organisms living in the same environment. The chain is Cytochrome c nitrite reductase subunit NrfA from Nitratidesulfovibrio vulgaris (strain ATCC 29579 / DSM 644 / CCUG 34227 / NCIMB 8303 / VKM B-1760 / Hildenborough) (Desulfovibrio vulgaris).